The sequence spans 610 residues: Putative sensor histidine kinase NtrY-like (610 aa).

4 consecutive transmembrane segments (helical) span residues I18–I38, K49–T69, I92–A112, and I292–V312. Residues A314–R368 enclose the HAMP domain. The Histidine kinase domain maps to K385 to E596. Residue H388 is modified to Phosphohistidine; by autocatalysis.

The protein localises to the cell membrane. It catalyses the reaction ATP + protein L-histidine = ADP + protein N-phospho-L-histidine.. Its function is as follows. Member of the two-component regulatory system RBE_0470/RBE_0312. In Rickettsia bellii (strain RML369-C), this protein is Putative sensor histidine kinase NtrY-like.